Reading from the N-terminus, the 63-residue chain is Cytochrome c oxidase subunit 5A, mitochondrial (63 aa).

The protein belongs to the cytochrome c oxidase subunit 5A family. As to quaternary structure, component of the cytochrome c oxidase (complex IV, CIV), a multisubunit enzyme composed of a catalytic core of 3 subunits and several supernumerary subunits. The complex exists as a monomer or a dimer and forms supercomplexes (SCs) in the inner mitochondrial membrane with ubiquinol-cytochrome c oxidoreductase (cytochrome b-c1 complex, complex III, CIII).

It localises to the mitochondrion inner membrane. Its pathway is energy metabolism; oxidative phosphorylation. Component of the cytochrome c oxidase, the last enzyme in the mitochondrial electron transport chain which drives oxidative phosphorylation. The respiratory chain contains 3 multisubunit complexes succinate dehydrogenase (complex II, CII), ubiquinol-cytochrome c oxidoreductase (cytochrome b-c1 complex, complex III, CIII) and cytochrome c oxidase (complex IV, CIV), that cooperate to transfer electrons derived from NADH and succinate to molecular oxygen, creating an electrochemical gradient over the inner membrane that drives transmembrane transport and the ATP synthase. Cytochrome c oxidase is the component of the respiratory chain that catalyzes the reduction of oxygen to water. Electrons originating from reduced cytochrome c in the intermembrane space (IMS) are transferred via the dinuclear copper A center (CU(A)) of subunit 2 and heme A of subunit 1 to the active site in subunit 1, a binuclear center (BNC) formed by heme A3 and copper B (CU(B)). The BNC reduces molecular oxygen to 2 water molecules using 4 electrons from cytochrome c in the IMS and 4 protons from the mitochondrial matrix. The sequence is that of Cytochrome c oxidase subunit 5A, mitochondrial (COVA) from Manduca sexta (Tobacco hawkmoth).